The following is a 538-amino-acid chain: Cytochrome P450 52A4 (538 aa).

The helical transmembrane segment at 27–46 (WYILIPTILLTLNFLSILHT) threads the bilayer. C485 provides a ligand contact to heme.

The protein belongs to the cytochrome P450 family. Requires heme as cofactor.

It localises to the membrane. In terms of biological role, together with an NADPH cytochrome P450 the enzyme system catalyzes the terminal hydroxylation as the first step in the assimilation of alkanes and fatty acids. In Candida maltosa (Yeast), this protein is Cytochrome P450 52A4 (CYP52A4).